We begin with the raw amino-acid sequence, 308 residues long: Vacuolar lysine transporter YPQ1 (308 aa).

Topologically, residues 1 to 12 are vacuolar; the sequence is MQLVPLELNRST. The N-linked (GlcNAc...) asparagine glycan is linked to asparagine 9. The PQ-loop 1 domain maps to 10–76; it reads RSTLSGISGS…QHLLSTMIIL (67 aa). A helical membrane pass occupies residues 13–33; that stretch reads LSGISGSISISCWIIVFVPQI. The Cytoplasmic segment spans residues 34–44; that stretch reads YENFYRKSSDG. The chain crosses the membrane as a helical span at residues 45-65; sequence LSLLFVVLWLAGDVFNLMGAV. Over 66–68 the chain is Vacuolar; it reads MQH. A helical transmembrane segment spans residues 69–89; the sequence is LLSTMIILAAYYTVADIILLG. Over 90–167 the chain is Cytoplasmic; that stretch reads QCLWYDNEEK…EVNSRNLIKD (78 aa). A helical membrane pass occupies residues 168–188; that stretch reads IFIVSGVVFVGFISWYVTYCV. The N-linked (GlcNAc...) asparagine glycan is linked to asparagine 189. Topologically, residues 189–205 are vacuolar; the sequence is NYTQPPPVEDPSLPVPE. The helical transmembrane segment at 206 to 226 threads the bilayer; sequence LQINWMAQIFGYLSALLYLGS. The PQ-loop 2 domain maps to 211–274; that stretch reads MAQIFGYLSA…ISLDWKYLIM (64 aa). Residues 227-244 lie on the Cytoplasmic side of the membrane; the sequence is RIPQILLNFKRKSCEGIS. A helical membrane pass occupies residues 245-265; sequence FLFFLFACLGNTTFIFSVIVI. Over 266-277 the chain is Vacuolar; sequence SLDWKYLIMNAS. N-linked (GlcNAc...) asparagine glycosylation is present at asparagine 275. A helical transmembrane segment spans residues 278–298; it reads WLVGSIGTLFMDFVIFSQFFI. At 299-308 the chain is on the cytoplasmic side; that stretch reads YKRNKKFILN.

It belongs to the laat-1 family.

The protein localises to the vacuole membrane. In terms of biological role, amino acid transporter that moves lysine into the vacuole. May also contribute to low affinity arginine import into the vacuole. Has also been suggested to mediate export of cationic amino acids from the vacuole. May function as an amino acid/proton antiporter. The polypeptide is Vacuolar lysine transporter YPQ1 (YPQ1) (Saccharomyces cerevisiae (strain ATCC 204508 / S288c) (Baker's yeast)).